The sequence spans 305 residues: Translation initiation factor eIF2B subunit alpha (305 aa).

This sequence belongs to the eIF-2B alpha/beta/delta subunits family. In terms of assembly, component of the translation initiation factor 2B (eIF2B) complex which is a heterodecamer of two sets of five different subunits: alpha, beta, gamma, delta and epsilon. Subunits alpha, beta and delta comprise a regulatory subcomplex and subunits epsilon and gamma comprise a catalytic subcomplex. Within the complex, the hexameric regulatory complex resides at the center, with the two heterodimeric catalytic subcomplexes bound on opposite sides.

It is found in the cytoplasm. Its subcellular location is the cytosol. Acts as a component of the translation initiation factor 2B (eIF2B) complex, which catalyzes the exchange of GDP for GTP on eukaryotic initiation factor 2 (eIF2) gamma subunit. Its guanine nucleotide exchange factor activity is repressed when bound to eIF2 complex phosphorylated on the alpha subunit, thereby limiting the amount of methionyl-initiator methionine tRNA available to the ribosome and consequently global translation is repressed. This is Translation initiation factor eIF2B subunit alpha from Caenorhabditis elegans.